We begin with the raw amino-acid sequence, 97 residues long: MQPMTHNPGAEAVAAQVIANAARGLAGGTTASAAVTALVPAGADEVSALAAVAFASEGVEALAANAFAQEELTRAGAAFAEIAGIYNAVDAANAATM.

Belongs to the mycobacterial PE family.

Functionally, part of the ESX-1 / type VII specialized secretion system (T7SS), which exports several proteins including EsxA and EsxB. Plays a role in DNA conjugation, in at least a donor strain. This is an uncharacterized protein from Mycolicibacterium smegmatis (strain ATCC 700084 / mc(2)155) (Mycobacterium smegmatis).